The chain runs to 637 residues: Poly(U)-binding-splicing factor hfp (637 aa).

Composition is skewed to basic and acidic residues over residues 1–20 (MGSN…REIS) and 28–37 (TRSDSGKSTD). The disordered stretch occupies residues 1 to 41 (MGSNDRASRSPRSDDQREISDMPATKRTRSDSGKSTDSKIP). Phosphoserine occurs at positions 13 and 30. RRM domains lie at 130–208 (CRVY…RPSN) and 227–305 (NRIY…RSIT). The region spanning 537 to 627 (RVIILRNMVG…RRVVAELYDQ (91 aa)) is the RRM 3; atypical domain.

Belongs to the RRM half pint family. As to quaternary structure, interacts with enc. However, given the cytoplasmic localization of enc, the relevance of such interaction is unclear. In terms of tissue distribution, expressed in all germline cells and within the follicle cell.

Its subcellular location is the nucleus. In terms of biological role, splicing factor that regulates oogenesis and controls both mitosis and mRNA localization in the germline by regulating mRNA splicing of a subset of genes within the ovary. Probably acts by regulating the alternative splice site selection of the otu transcript. Also regulates the alternative splicing of eIF4E1 and grk, while it is not involved in the splicing of par-1, sqd or psq. Involved in the alternative splicing of the bicistronic pre-mRNA encoding Kdm3 and CG8176; required for the efficient production of mRNA encoding Kdm3 and Kdm3-mediated regulation of rhino-dependent piRNA production. In Drosophila melanogaster (Fruit fly), this protein is Poly(U)-binding-splicing factor hfp.